The following is a 277-amino-acid chain: MEAMPCHNQRLGAAGGPRPQDEQTAPAGGCSRLIRFAEPSEGSSSGSPSPDSSSGSNGAAAAPSPAAEDCASPLGAQLKLLPMNDQIRELQTIIRDKTASRGDFVFSADRLIRLVVEERLNQLPYTECTVTTPTGYKYEGVKFEKGNCGVSIMRSGEAMEQGLRDCCRSIRIGKILIQSDEETQRAKVYYAKFPPDIYRRKVLLMYPILSTGNTVIEAVKVLIEHGVQPSVIILLSLFSTPHGAKSIIQEFPEITILTTEVHPVAPTHFGQKYFGTD.

The disordered stretch occupies residues 1 to 69; the sequence is MEAMPCHNQR…AAAPSPAAED (69 aa). Low complexity predominate over residues 37–69; it reads AEPSEGSSSGSPSPDSSSGSNGAAAAPSPAAED. Residues arginine 101, arginine 110, and 144–147 each bind GTP; that span reads EKGN. Arginine 154 contacts 5-phospho-alpha-D-ribose 1-diphosphate. Arginine 171 and arginine 200 together coordinate GTP. A 5-phospho-alpha-D-ribose 1-diphosphate-binding site is contributed by 206–214; that stretch reads YPILSTGNT. Residue 267–269 participates in uracil binding; the sequence is THF.

This sequence belongs to the UPRTase family.

The protein localises to the cytoplasm. It is found in the nucleus. The polypeptide is Uracil phosphoribosyltransferase homolog (UPRT) (Gallus gallus (Chicken)).